Here is a 348-residue protein sequence, read N- to C-terminus: S-adenosylmethionine:tRNA ribosyltransferase-isomerase (348 aa).

It belongs to the QueA family. As to quaternary structure, monomer.

Its subcellular location is the cytoplasm. The catalysed reaction is 7-aminomethyl-7-carbaguanosine(34) in tRNA + S-adenosyl-L-methionine = epoxyqueuosine(34) in tRNA + adenine + L-methionine + 2 H(+). Its pathway is tRNA modification; tRNA-queuosine biosynthesis. In terms of biological role, transfers and isomerizes the ribose moiety from AdoMet to the 7-aminomethyl group of 7-deazaguanine (preQ1-tRNA) to give epoxyqueuosine (oQ-tRNA). In Alteromonas mediterranea (strain DSM 17117 / CIP 110805 / LMG 28347 / Deep ecotype), this protein is S-adenosylmethionine:tRNA ribosyltransferase-isomerase.